Consider the following 306-residue polypeptide: Methionyl-tRNA formyltransferase (306 aa).

S110–P113 lines the (6S)-5,6,7,8-tetrahydrofolate pocket.

Belongs to the Fmt family.

It catalyses the reaction L-methionyl-tRNA(fMet) + (6R)-10-formyltetrahydrofolate = N-formyl-L-methionyl-tRNA(fMet) + (6S)-5,6,7,8-tetrahydrofolate + H(+). Attaches a formyl group to the free amino group of methionyl-tRNA(fMet). The formyl group appears to play a dual role in the initiator identity of N-formylmethionyl-tRNA by promoting its recognition by IF2 and preventing the misappropriation of this tRNA by the elongation apparatus. The polypeptide is Methionyl-tRNA formyltransferase (Brucella anthropi (strain ATCC 49188 / DSM 6882 / CCUG 24695 / JCM 21032 / LMG 3331 / NBRC 15819 / NCTC 12168 / Alc 37) (Ochrobactrum anthropi)).